Here is an 85-residue protein sequence, read N- to C-terminus: uncharacterized protein (85 aa).

The disordered stretch occupies residues 1-85 (MRWRPSSWSA…DQEQCGQHCR (85 aa)). Residues 47-61 (ASVEGEGGRHADRHG) show a composition bias toward basic and acidic residues.

This is an uncharacterized protein from Streptomyces lividans.